Here is a 1088-residue protein sequence, read N- to C-terminus: Leucine-rich repeat receptor-like protein kinase PEPR2 (1088 aa).

Residues 1–26 (MRNLGLLEITLLCSLFVYFRIDSVSS) form the signal peptide. The Extracellular portion of the chain corresponds to 27-739 (LNSDGLALLS…QVKLSTWKIA (713 aa)). Residues N55, N82, and N122 are each glycosylated (N-linked (GlcNAc...) asparagine). LRR repeat units follow at residues 75-99 (GNVV…IGEL), 100-122 (KSLV…TLGN), 123-146 (CTSL…IFGS), 147-170 (LQNL…SVGG), 172-194 (IELV…LLGN), 195-219 (CSKL…LYLL), 221-243 (NLGE…SSNC), 244-267 (KKLV…IGNC), 269-291 (SLHS…MGML), 292-315 (RKVS…LGNC), 316-339 (SSLE…LSKL), 341-363 (KLQS…IWKI), 365-387 (SLTQ…VTQL), 388-411 (KHLK…LGLN), 412-435 (RSLE…LCHG), 436-459 (QKLR…IRQC), 460-485 (KTLE…SLSL), 487-506 (YVNL…LGSC), 507-529 (KNLL…ELGN), 530-554 (LQSL…LSGC), 556-577 (RLLY…SFRS), 578-602 (WKSL…LAEL), 603-627 (DRLS…GLLK), 629-651 (LRYG…LGAL), 652-676 (INLE…SLKS), and 678-698 (NQVD…LLSN). N-linked (GlcNAc...) asparagine glycans are attached at residues N149, N159, N183, N194, N209, N229, N266, N279, and N314. 2 N-linked (GlcNAc...) asparagine glycosylation sites follow: N373 and N411. N-linked (GlcNAc...) asparagine glycans are attached at residues N537 and N568. N-linked (GlcNAc...) asparagine glycosylation is found at N658 and N698. Residues 740–760 (LIAAGSSLSVLALLFALFLVL) traverse the membrane as a helical segment. Topologically, residues 761–1088 (CRCKRGTKTE…FVRSTSGSVH (328 aa)) are cytoplasmic. T791 is modified (phosphothreonine). The Protein kinase domain occupies 794 to 1080 (LDDKYIIGRG…KDLTDLESFV (287 aa)). ATP is bound by residues 800-808 (IGRGAHGVV) and K822. Residues Y868 and Y908 each carry the phosphotyrosine modification. The active-site Proton acceptor is the D921. 2 positions are modified to phosphotyrosine: Y962 and Y969.

This sequence belongs to the protein kinase superfamily. Ser/Thr protein kinase family. Interacts with BAK1. Interacts with CLE14.

Its subcellular location is the cell membrane. It carries out the reaction L-seryl-[protein] + ATP = O-phospho-L-seryl-[protein] + ADP + H(+). The catalysed reaction is L-threonyl-[protein] + ATP = O-phospho-L-threonyl-[protein] + ADP + H(+). Functionally, acts as a receptor for PEP defense peptides. Unlike typical immune receptors, senses an endogenous elicitor that potentiates PAMP-inducible plant responses. This is Leucine-rich repeat receptor-like protein kinase PEPR2 (PEPR2) from Arabidopsis thaliana (Mouse-ear cress).